Consider the following 920-residue polypeptide: GTPase activating protein homolog 1 (920 aa).

Residues 65-87 show a composition bias toward low complexity; that stretch reads NLGGLSNDSTNNNSNSNNTIDSS. Residues 65–91 form a disordered region; that stretch reads NLGGLSNDSTNNNSNSNNTIDSSKPLS. The 255-residue stretch at 90–344 folds into the F-BAR domain; the sequence is LSFENDMSDG…FVDIIDPEVD (255 aa). A coiled-coil region spans residues 184 to 276; sequence LNEAIKDMEK…EDEYKEQINE (93 aa). The segment covering 403 to 449 has biased composition (low complexity); it reads TNTITSQSGSTIISNGASQPIEIPSPQPISEQQQIPPQQQQQQQQAQ. Disordered stretches follow at residues 403–468 and 490–518; these read TNTI…PMGR and STSS…LSKS. The segment covering 450–468 has biased composition (polar residues); that stretch reads VPPTSINQSSSPPVNPMGR. Residues 490 to 513 show a composition bias toward low complexity; that stretch reads STSSLLTKDGNSTTSSNTSTSNSN. Positions 533 to 716 constitute a Rho-GAP domain; it reads VELEVLIEND…NMIIDSLETK (184 aa). The disordered stretch occupies residues 727-836; it reads PIIPDDENSD…VSSNGNNINS (110 aa). Over residues 730–741 the composition is skewed to acidic residues; the sequence is PDDENSDDDDDD. The span at 757 to 836 shows a compositional bias: low complexity; it reads NDINTTNINN…VSSNGNNINS (80 aa).

The protein localises to the cytoplasm. It is found in the contractile vacuole. Functionally, rho GTPase-activating protein involved in the signal transduction pathway. Regulator of the contractile vacuole network as well as involved in driving vacuole emptying. This Dictyostelium discoideum (Social amoeba) protein is GTPase activating protein homolog 1 (mgp1).